The chain runs to 259 residues: 5'-nucleotidase SurE (259 aa).

A divalent metal cation is bound by residues Asp8, Asp9, Ser40, and Asn92.

This sequence belongs to the SurE nucleotidase family. A divalent metal cation serves as cofactor.

Its subcellular location is the cytoplasm. The catalysed reaction is a ribonucleoside 5'-phosphate + H2O = a ribonucleoside + phosphate. Functionally, nucleotidase that shows phosphatase activity on nucleoside 5'-monophosphates. This Stenotrophomonas maltophilia (strain R551-3) protein is 5'-nucleotidase SurE.